We begin with the raw amino-acid sequence, 394 residues long: D-mannose isomerase (394 aa).

Catalysis depends on proton donor/acceptor residues His-251 and His-380.

Belongs to the N-acylglucosamine 2-epimerase family. As to quaternary structure, monomer.

It catalyses the reaction D-mannose = D-fructose. The catalysed reaction is D-lyxose = D-xylulose. In terms of biological role, catalyzes the reversible isomerization of D-mannose to D-fructose. Can also isomerize D-lyxose, with lower efficiency. In longer reaction with a higher concentration of enzyme, it can isomerize 4-OH D-mannose derivatives (D-talose and 4-O-monosaccharyl-D-mannose). Cannot use D-glucose. This Marinomonas mediterranea (strain ATCC 700492 / JCM 21426 / NBRC 103028 / MMB-1) protein is D-mannose isomerase.